The sequence spans 153 residues: Carbohydrate-binding protein AWN (153 aa).

Residues 1-20 (MKLAAPSLALLLSTATLVSG) form the signal peptide. The residue at position 21 (A21) is an N-acetylalanine. Cystine bridges form between C29/C50 and C73/C94. Positions 29–130 (CGGVLRDPPG…SPFHIYYYAD (102 aa)) constitute a CUB domain. The tract at residues 93–130 (ICGGISLVFRSSSNIATIKYLRTSGQRASPFHIYYYAD) is heparin-binding.

Belongs to the spermadhesin family. Post-translationally, partial N-acetylation differentiates isoforms AWN-1 (not acetylated) and AWN-2 (acetylated).

Its subcellular location is the secreted. Its function is as follows. AWN proteins mediate the binding of boar spermatozoa to component(s) of the egg's zona pellucida by a carbohydrate-binding mechanism. Awn proteins are secretory components of the male accessory glands being coated to the sperm surface at the time of ejaculation. They possess as well heparin-, serine-protease-inhibitor-binding capability. The chain is Carbohydrate-binding protein AWN from Sus scrofa (Pig).